A 2181-amino-acid polypeptide reads, in one-letter code: Non-reducing polyketide synthase dpmaA (2181 aa).

The N-terminal acylcarrier protein transacylase domain (SAT) stretch occupies residues 74–180 (QWVKGNSTQP…LALCCGAYID (107 aa)). One can recognise a Ketosynthase family 3 (KS3) domain in the interval 347–779 (QAQLLVLGPV…GTNAAMLVCQ (433 aa)). Residues Cys-525, His-661, and His-702 each act as for beta-ketoacyl synthase activity in the active site. Residues 891 to 1193 (VLAGQTGRRV…SFYPAALGEP (303 aa)) are malonyl-CoA:ACP transacylase (MAT) domain. Residue Ser-977 is the For acyl/malonyl transferase activity of the active site. An N-terminal hotdog fold region spans residues 1269–1401 (VSLIGKTQNA…GVITLQEVYS (133 aa)). The PKS/mFAS DH domain maps to 1269-1579 (VSLIGKTQNA…FQKIAISSLK (311 aa)). A product template (PT) domain region spans residues 1276–1573 (QNAGVQTVEY…TILGAKFQKI (298 aa)). The C-terminal hotdog fold stretch occupies residues 1425-1579 (SASVVQGDFI…FQKIAISSLK (155 aa)). Polar residues predominate over residues 1587–1603 (GVPQTSGGRTPSSSITE). Disordered regions lie at residues 1587-1618 (GVPQ…PIPG) and 1652-1675 (ISGS…AMET). Residues 1653 to 1670 (SGSSRSTSSSPPSLESRS) show a composition bias toward low complexity. Positions 1677 to 1753 (EITEGAGSAL…TLFHTIFPQQ (77 aa)) constitute a Carrier domain. Ser-1713 is subject to O-(pantetheine 4'-phosphoryl)serine. Residues 1982 to 2164 (EFMNCLFSYN…QSGFDHIDWT (183 aa)) form a methyltransferase (CMeT) domain region.

It participates in secondary metabolite biosynthesis; terpenoid biosynthesis. Functionally, non-reducing polyketide synthase; part of the gene cluster that mediates the biosynthesis of the diterpenoid pyrones subglutinols A and B. The first step of the pathway is the synthesis of the alpha-pyrone moiety by the polyketide synthase dpmaA via condensation of one acetyl-CoA starter unit with 3 malonyl-CoA units and 2 methylations. The alpha-pyrone is then combined with geranylgeranyl pyrophosphate (GGPP) formed by the GGPP synthase dpmaD through the action of the prenyltransferase dpmaC to yield a linear alpha-pyrone diterpenoid. Subsequent steps in the diterpenoid pyrone biosynthetic pathway involve the decalin core formation, which is initiated by the epoxidation of the C10-C11 olefin by the FAD-dependent oxidoreductase dpmaE, and is followed by a cyclization cascade catalyzed by the terpene cyclase dpmaB. The dehydrogenase dpmaF is then involved in tetrahydrofuran (THF) ring formation at the C5 unit to complete the formation of subglutinols A and B. The sequence is that of Non-reducing polyketide synthase dpmaA from Metarhizium anisopliae (Entomophthora anisopliae).